A 132-amino-acid chain; its full sequence is Fluoride-specific ion channel FluC 1 (132 aa).

4 helical membrane passes run 9–29 (LAAVFAGGALGSLARAALSAL), 35–55 (ASWPWPTFTVNIVGAFLVGYF), 72–89 (LLGTGFCGGLTTFSTMQV), and 100–120 (WGLAAGYTLTSIAAGLLAVHL). Na(+)-binding residues include Gly79 and Thr82.

The protein belongs to the fluoride channel Fluc/FEX (TC 1.A.43) family.

The protein localises to the cell membrane. The enzyme catalyses fluoride(in) = fluoride(out). With respect to regulation, na(+) is not transported, but it plays an essential structural role and its presence is essential for fluoride channel function. Its function is as follows. Fluoride-specific ion channel. Important for reducing fluoride concentration in the cell, thus reducing its toxicity. The protein is Fluoride-specific ion channel FluC 1 of Mycolicibacterium paratuberculosis (strain ATCC BAA-968 / K-10) (Mycobacterium paratuberculosis).